The primary structure comprises 175 residues: B9 domain-containing protein 2 (175 aa).

Residues 2-118 (AELHIIGQII…QCVTWRPLGS (117 aa)) form the C2 B9-type domain.

Belongs to the B9D family. As to quaternary structure, part of the tectonic-like complex (also named B9 complex).

Its subcellular location is the cytoplasm. The protein resides in the cytoskeleton. The protein localises to the cilium basal body. It is found in the cilium axoneme. Component of the tectonic-like complex, a complex localized at the transition zone of primary cilia and acting as a barrier that prevents diffusion of transmembrane proteins between the cilia and plasma membranes. The chain is B9 domain-containing protein 2 (b9d2) from Danio rerio (Zebrafish).